The following is a 236-amino-acid chain: Ubiquinone biosynthesis O-methyltransferase (236 aa).

Positions 39, 59, 80, and 124 each coordinate S-adenosyl-L-methionine.

The protein belongs to the methyltransferase superfamily. UbiG/COQ3 family.

The catalysed reaction is a 3-demethylubiquinol + S-adenosyl-L-methionine = a ubiquinol + S-adenosyl-L-homocysteine + H(+). It carries out the reaction a 3-(all-trans-polyprenyl)benzene-1,2-diol + S-adenosyl-L-methionine = a 2-methoxy-6-(all-trans-polyprenyl)phenol + S-adenosyl-L-homocysteine + H(+). It participates in cofactor biosynthesis; ubiquinone biosynthesis. Its function is as follows. O-methyltransferase that catalyzes the 2 O-methylation steps in the ubiquinone biosynthetic pathway. In Shewanella sp. (strain MR-4), this protein is Ubiquinone biosynthesis O-methyltransferase.